Consider the following 267-residue polypeptide: 4-hydroxy-tetrahydrodipicolinate reductase (267 aa).

NAD(+) contacts are provided by residues 8 to 13 and Glu-34; that span reads GAAGRM. Residue Arg-35 coordinates NADP(+). Residues 98 to 100 and 122 to 125 each bind NAD(+); these read GST and APNM. His-155 (proton donor/acceptor) is an active-site residue. His-156 lines the (S)-2,3,4,5-tetrahydrodipicolinate pocket. Catalysis depends on Lys-159, which acts as the Proton donor. A (S)-2,3,4,5-tetrahydrodipicolinate-binding site is contributed by 165 to 166; sequence GT.

Belongs to the DapB family.

Its subcellular location is the cytoplasm. It carries out the reaction (S)-2,3,4,5-tetrahydrodipicolinate + NAD(+) + H2O = (2S,4S)-4-hydroxy-2,3,4,5-tetrahydrodipicolinate + NADH + H(+). The enzyme catalyses (S)-2,3,4,5-tetrahydrodipicolinate + NADP(+) + H2O = (2S,4S)-4-hydroxy-2,3,4,5-tetrahydrodipicolinate + NADPH + H(+). The protein operates within amino-acid biosynthesis; L-lysine biosynthesis via DAP pathway; (S)-tetrahydrodipicolinate from L-aspartate: step 4/4. In terms of biological role, catalyzes the conversion of 4-hydroxy-tetrahydrodipicolinate (HTPA) to tetrahydrodipicolinate. The sequence is that of 4-hydroxy-tetrahydrodipicolinate reductase from Geotalea uraniireducens (strain Rf4) (Geobacter uraniireducens).